The primary structure comprises 456 residues: GTPase Der (456 aa).

EngA-type G domains are found at residues 4 to 169 (PIVA…PSKE) and 178 to 353 (IQLA…EQHR). GTP is bound by residues 10–17 (GRPNVGKS), 57–61 (DTGGL), 120–123 (NKCE), 184–191 (GRPNVGKS), 231–235 (DTAGI), and 296–299 (NKWD). The 86-residue stretch at 354–439 (RRVSTSVVNE…PLKLFWRGKQ (86 aa)) folds into the KH-like domain.

This sequence belongs to the TRAFAC class TrmE-Era-EngA-EngB-Septin-like GTPase superfamily. EngA (Der) GTPase family. Associates with the 50S ribosomal subunit.

In terms of biological role, GTPase that plays an essential role in the late steps of ribosome biogenesis. In Prochlorococcus marinus (strain MIT 9211), this protein is GTPase Der.